Here is a 291-residue protein sequence, read N- to C-terminus: MEMO1 family protein PYRAB05390 (291 aa).

Belongs to the MEMO1 family.

The sequence is that of MEMO1 family protein PYRAB05390 from Pyrococcus abyssi (strain GE5 / Orsay).